We begin with the raw amino-acid sequence, 134 residues long: MEGKTVISSLLIMSLVLAQIQVEAKICCPTKDDRSVYFVCMLSVSSQFYCLLKSKCKNTSQTICPPGYTNDILENSGDAVNEYCKLGCASSVCGALTTLQNFDTSKVLSEAVEQCTKACSSVCTGGSTAAVKSA.

An N-terminal signal peptide occupies residues methionine 1–alanine 24. Cystine bridges form between cysteine 27-cysteine 64, cysteine 28-cysteine 56, and cysteine 40-cysteine 50. A propeptide spans aspartate 71–alanine 134 (acidic domain).

Belongs to the plant thionin (TC 1.C.44) family. Low basal expression in seedlings. Also detected in rosette leaves.

The protein localises to the secreted. Functionally, thionins are small plant proteins which are toxic to animal cells. They seem to exert their toxic effect at the level of the cell membrane. Their precise function is not known. The protein is Thionin-2.2 (THI2.2) of Arabidopsis thaliana (Mouse-ear cress).